The chain runs to 152 residues: Ribonuclease H (152 aa).

Residues 4 to 145 (SRSMVEIFSD…CDELARQAIA (142 aa)) enclose the RNase H type-1 domain. Positions 13, 51, 73, and 137 each coordinate Mg(2+).

The protein belongs to the RNase H family. In terms of assembly, monomer. The cofactor is Mg(2+).

The protein resides in the cytoplasm. The catalysed reaction is Endonucleolytic cleavage to 5'-phosphomonoester.. Its function is as follows. Endonuclease that specifically degrades the RNA of RNA-DNA hybrids. This chain is Ribonuclease H, found in Syntrophotalea carbinolica (strain DSM 2380 / NBRC 103641 / GraBd1) (Pelobacter carbinolicus).